A 133-amino-acid polypeptide reads, in one-letter code: ATP synthase epsilon chain, chloroplastic (133 aa).

This sequence belongs to the ATPase epsilon chain family. As to quaternary structure, F-type ATPases have 2 components, CF(1) - the catalytic core - and CF(0) - the membrane proton channel. CF(1) has five subunits: alpha(3), beta(3), gamma(1), delta(1), epsilon(1). CF(0) has three main subunits: a, b and c.

Its subcellular location is the plastid. The protein resides in the chloroplast thylakoid membrane. In terms of biological role, produces ATP from ADP in the presence of a proton gradient across the membrane. This chain is ATP synthase epsilon chain, chloroplastic, found in Eucalyptus globulus subsp. globulus (Tasmanian blue gum).